The sequence spans 367 residues: Choline-phosphate cytidylyltransferase A (367 aa).

At Met-1 the chain carries N-acetylmethionine. The interval 1 to 31 is disordered; it reads MDAQSSAKVNSRKRRKEVPGPNGATEEDGIP. An N6-acetyllysine modification is found at Lys-8. Ile-84, Phe-85, His-92, and Lys-122 together coordinate CTP. Phosphocholine contacts are provided by Lys-122 and Trp-151. 7 residues coordinate CTP: His-168, Asp-169, Tyr-173, Gln-195, Arg-196, Thr-197, and Ile-200. Amphipathic regions lie at residues 228-287 and 298-315; these read KELN…EFIG and ALKH…QAIS. Phosphoserine is present on Ser-233. The interval 272-293 is autoinhibitory (AI); it reads IDLIQKWEEKSREFIGSFLEMF. The tract at residues 313–367 is disordered; the sequence is AISPKQSPSSSPTHERSPSPSFRWPFSGKTSPSSSPASLSRCKAVTCDISEDEED. Ser-315 is modified (phosphoserine; by PKC). Polar residues predominate over residues 315-324; sequence SPKQSPSSSP. A phosphoserine mark is found at Ser-319, Ser-321, Ser-322, and Ser-323. Repeat 1 spans residues 319-324; sequence SPSSSP. Residues 319–348 form a 3 X repeats region; that stretch reads SPSSSPTHERSPSPSFRWPFSGKTSPSSSP. Thr-325 carries the post-translational modification Phosphothreonine. Phosphoserine is present on residues Ser-329 and Ser-331. The 2; approximate repeat unit spans residues 329–333; sequence SPSPS. Over residues 330–352 the composition is skewed to low complexity; that stretch reads PSPSFRWPFSGKTSPSSSPASLS. Ser-333 carries the post-translational modification Phosphoserine; by PKC. Thr-342 is subject to Phosphothreonine. Ser-343, Ser-345, Ser-346, Ser-347, Ser-350, and Ser-352 each carry phosphoserine. The stretch at 343–348 is repeat 3; sequence SPSSSP. Thr-358 is subject to Phosphothreonine. Ser-362 is subject to Phosphoserine; by CK2.

It belongs to the cytidylyltransferase family. Homodimer. Post-translationally, the serine residues of the C-terminus are phosphorylated. The inactive soluble form is stabilized by phosphorylation, the active membrane bound form is promoted by anionic lipids or diacylglycerol, and is stabilized by dephosphorylation. The N-terminus is blocked. In terms of processing, monoubiquitinated by the SCF(FBXL2) complex, leading to proteasomal degradation.

It localises to the cytoplasm. The protein resides in the cytosol. Its subcellular location is the membrane. It is found in the endoplasmic reticulum membrane. The protein localises to the nucleus. It carries out the reaction phosphocholine + CTP + H(+) = CDP-choline + diphosphate. The protein operates within phospholipid metabolism; phosphatidylcholine biosynthesis; phosphatidylcholine from phosphocholine: step 1/2. Its activity is regulated as follows. Interconverts between an inactive cytosolic form and an active membrane-bound form. Activation involves disruption of an inhibitory interaction between helices at the base of the active site and the autoinhibitory (AI) region. Activated by N-methylethanolamine. Activated by oleic acid-containing phosphatidylcholine vesicles. Its function is as follows. Catalyzes the key rate-limiting step in the CDP-choline pathway for phosphatidylcholine biosynthesis. In Rattus norvegicus (Rat), this protein is Choline-phosphate cytidylyltransferase A (Pcyt1a).